The primary structure comprises 1651 residues: Protein Wiz (1651 aa).

Residues M1–H79 are disordered. Residues A11, R14, N29, G32, G39, G42, and E258 each participate in a glycyl lysine isopeptide (Lys-Gly) (interchain with G-Cter in SUMO2) cross-link. C2H2-type zinc fingers lie at residues F267–H289, L304–H326, and L353–H375. F313 participates in a covalent cross-link: Glycyl lysine isopeptide (Lys-Gly) (interchain with G-Cter in SUMO2). The tract at residues M376–P399 is disordered. Low complexity predominate over residues E386–P399. The C2H2-type 4 zinc finger occupies S416–H439. Residues L546–V578 are disordered. Residues E567–V578 are compositionally biased toward acidic residues. 2 C2H2-type zinc fingers span residues R701 to H723 and M769 to H791. The disordered stretch occupies residues A819–P843. The segment at T870–H892 adopts a C2H2-type 7 zinc-finger fold. Residues K883, K939, K955, K967, and K988 each participate in a glycyl lysine isopeptide (Lys-Gly) (interchain with G-Cter in SUMO2) cross-link. A disordered region spans residues F972 to E1038. Over residues P984–A994 the composition is skewed to low complexity. A Phosphoserine modification is found at S996. A Phosphothreonine modification is found at T998. Residues K1000 and K1005 each participate in a glycyl lysine isopeptide (Lys-Gly) (interchain with G-Cter in SUMO2) cross-link. S1006, S1012, S1017, and S1025 each carry phosphoserine. The interaction with CTBP1 and CTBP2 1 stretch occupies residues P1030–T1034. A C2H2-type 8 zinc finger spans residues I1043–H1065. K1056 participates in a covalent cross-link: Glycyl lysine isopeptide (Lys-Gly) (interchain with G-Cter in SUMO2). A phosphoserine mark is found at S1079 and S1106. The tract at residues R1091 to K1174 is disordered. Residues G1097–S1106 show a composition bias toward pro residues. Glycyl lysine isopeptide (Lys-Gly) (interchain with G-Cter in SUMO2) cross-links involve residues K1108 and K1112. A phosphoserine mark is found at S1122, S1127, and S1134. Residues K1138 and K1139 each participate in a glycyl lysine isopeptide (Lys-Gly) (interchain with G-Cter in SUMO2) cross-link. 2 positions are modified to phosphoserine: S1146 and S1151. Residue K1162 is modified to N6,N6,N6-trimethyllysine; by EHMT2; alternate. At K1162 the chain carries N6,N6-dimethyllysine; by EHMT2; alternate. A Glycyl lysine isopeptide (Lys-Gly) (interchain with G-Cter in SUMO2) cross-link involves residue K1177. Residues P1214–S1218 form an interaction with CTBP1 and CTBP2 2 region. The C2H2-type 9 zinc finger occupies I1227–H1249. K1240 participates in a covalent cross-link: Glycyl lysine isopeptide (Lys-Gly) (interchain with G-Cter in SUMO2). Phosphoserine is present on S1263. A Glycyl lysine isopeptide (Lys-Gly) (interchain with G-Cter in SUMO2) cross-link involves residue K1282. Positions K1283–P1331 are disordered. Residues T1301–L1313 show a composition bias toward pro residues. S1309 and S1314 each carry phosphoserine. Positions P1315–A1328 are enriched in low complexity. Residues K1343, K1356, K1370, K1372, and K1382 each participate in a glycyl lysine isopeptide (Lys-Gly) (interchain with G-Cter in SUMO2) cross-link. A C2H2-type 10 zinc finger spans residues A1397–H1419. Residues K1448, K1464, and K1477 each participate in a glycyl lysine isopeptide (Lys-Gly) (interchain with G-Cter in SUMO2) cross-link. The segment at T1463 to T1554 is disordered. S1480 carries the phosphoserine modification. Residues L1481–R1493 show a composition bias toward low complexity. S1517 bears the Phosphoserine mark. Residue K1523 forms a Glycyl lysine isopeptide (Lys-Gly) (interchain with G-Cter in SUMO1); alternate linkage. A Glycyl lysine isopeptide (Lys-Gly) (interchain with G-Cter in SUMO2); alternate cross-link involves residue K1523. Positions K1523–R1541 are enriched in basic and acidic residues. Residues K1534 and K1560 each participate in a glycyl lysine isopeptide (Lys-Gly) (interchain with G-Cter in SUMO2) cross-link. The C2H2-type 11 zinc-finger motif lies at L1596 to H1622. Residues S1629 to P1651 are disordered. K1630 participates in a covalent cross-link: Glycyl lysine isopeptide (Lys-Gly) (interchain with G-Cter in SUMO2). Residues E1637–P1651 show a composition bias toward low complexity.

The protein belongs to the krueppel C2H2-type zinc-finger protein family. As to quaternary structure, interacts with EHMT1, EHMT2, CTBP1 and CTBP2. Part of a complex containing at least CDYL, REST, WIZ, SETB1, EHMT1 and EHMT2.

Its subcellular location is the nucleus. In terms of biological role, may link EHMT1 and EHMT2 histone methyltransferases to the CTBP corepressor machinery. May be involved in EHMT1-EHMT2 heterodimer formation and stabilization. This is Protein Wiz (WIZ) from Homo sapiens (Human).